We begin with the raw amino-acid sequence, 337 residues long: Ketol-acid reductoisomerase (NADP(+)) (337 aa).

The KARI N-terminal Rossmann domain occupies valine 3 to threonine 183. NADP(+)-binding positions include tyrosine 26–glutamine 29, lysine 49, serine 52, serine 54, and aspartate 84–glutamine 87. Histidine 109 is an active-site residue. An NADP(+)-binding site is contributed by glycine 135. Residues threonine 184–valine 329 form the KARI C-terminal knotted domain. Positions 192, 196, 228, and 232 each coordinate Mg(2+). Residue serine 253 participates in substrate binding.

This sequence belongs to the ketol-acid reductoisomerase family. Requires Mg(2+) as cofactor.

It catalyses the reaction (2R)-2,3-dihydroxy-3-methylbutanoate + NADP(+) = (2S)-2-acetolactate + NADPH + H(+). The enzyme catalyses (2R,3R)-2,3-dihydroxy-3-methylpentanoate + NADP(+) = (S)-2-ethyl-2-hydroxy-3-oxobutanoate + NADPH + H(+). It participates in amino-acid biosynthesis; L-isoleucine biosynthesis; L-isoleucine from 2-oxobutanoate: step 2/4. Its pathway is amino-acid biosynthesis; L-valine biosynthesis; L-valine from pyruvate: step 2/4. Its function is as follows. Involved in the biosynthesis of branched-chain amino acids (BCAA). Catalyzes an alkyl-migration followed by a ketol-acid reduction of (S)-2-acetolactate (S2AL) to yield (R)-2,3-dihydroxy-isovalerate. In the isomerase reaction, S2AL is rearranged via a Mg-dependent methyl migration to produce 3-hydroxy-3-methyl-2-ketobutyrate (HMKB). In the reductase reaction, this 2-ketoacid undergoes a metal-dependent reduction by NADPH to yield (R)-2,3-dihydroxy-isovalerate. The polypeptide is Ketol-acid reductoisomerase (NADP(+)) (Mycolicibacterium smegmatis (strain ATCC 700084 / mc(2)155) (Mycobacterium smegmatis)).